The primary structure comprises 355 residues: Uroporphyrinogen decarboxylase (355 aa).

Substrate is bound by residues Arg-27–Arg-31, Asp-78, Tyr-155, Ser-210, and His-328.

Belongs to the uroporphyrinogen decarboxylase family. In terms of assembly, homodimer.

It localises to the cytoplasm. It carries out the reaction uroporphyrinogen III + 4 H(+) = coproporphyrinogen III + 4 CO2. Its pathway is porphyrin-containing compound metabolism; protoporphyrin-IX biosynthesis; coproporphyrinogen-III from 5-aminolevulinate: step 4/4. Functionally, catalyzes the decarboxylation of four acetate groups of uroporphyrinogen-III to yield coproporphyrinogen-III. This chain is Uroporphyrinogen decarboxylase, found in Pseudomonas aeruginosa (strain LESB58).